A 126-amino-acid chain; its full sequence is Large ribosomal subunit protein bL19 (126 aa).

Belongs to the bacterial ribosomal protein bL19 family.

Its function is as follows. This protein is located at the 30S-50S ribosomal subunit interface and may play a role in the structure and function of the aminoacyl-tRNA binding site. In Bordetella petrii (strain ATCC BAA-461 / DSM 12804 / CCUG 43448), this protein is Large ribosomal subunit protein bL19.